We begin with the raw amino-acid sequence, 418 residues long: Phosphoglycerate kinase (418 aa).

Valine 23, aspartate 24, phenylalanine 25, asparagine 26, glutamine 39, arginine 40, serine 63, histidine 64, glycine 66, arginine 67, leucine 122, arginine 123, histidine 170, and arginine 171 together coordinate (2R)-3-phosphoglycerate. Position 214 (glycine 214) interacts with ADP. Position 214 (glycine 214) interacts with CDP. The AMP site is built by alanine 215 and lysine 216. Alanine 215 provides a ligand contact to ATP. Mg(2+) is bound at residue alanine 215. CDP is bound at residue aspartate 219. Residue aspartate 219 participates in Mg(2+) binding. AMP is bound at residue lysine 220. Lysine 220 lines the ATP pocket. Glycine 238 provides a ligand contact to ADP. Residue glycine 238 participates in CDP binding. The AMP site is built by glycine 239 and glycine 313. 2 residues coordinate ATP: glycine 239 and glycine 313. Residues glycine 338, alanine 340, and phenylalanine 343 each contribute to the CDP site. ADP is bound at residue phenylalanine 343. Glutamate 344 contributes to the AMP binding site. Positions 344, 375, and 376 each coordinate ATP. Mg(2+) is bound at residue aspartate 375.

This sequence belongs to the phosphoglycerate kinase family. Monomer. Mg(2+) is required as a cofactor.

It is found in the cytoplasm. It localises to the mitochondrion. It catalyses the reaction (2R)-3-phosphoglycerate + ATP = (2R)-3-phospho-glyceroyl phosphate + ADP. It functions in the pathway carbohydrate degradation; glycolysis; pyruvate from D-glyceraldehyde 3-phosphate: step 2/5. Catalyzes one of the two ATP producing reactions in the glycolytic pathway via the reversible conversion of 1,3-diphosphoglycerate to 3-phosphoglycerate. Both L- and D- forms of purine and pyrimidine nucleotides can be used as substrates, but the activity is much lower on pyrimidines. Negatively regulates the biosynthesis of acetyl-CoA from pyruvate in the mitochondrion. This chain is Phosphoglycerate kinase (pgk-1), found in Neurospora crassa (strain ATCC 24698 / 74-OR23-1A / CBS 708.71 / DSM 1257 / FGSC 987).